A 201-amino-acid polypeptide reads, in one-letter code: Protein GrpE (201 aa).

Belongs to the GrpE family. In terms of assembly, homodimer.

It localises to the cytoplasm. In terms of biological role, participates actively in the response to hyperosmotic and heat shock by preventing the aggregation of stress-denatured proteins, in association with DnaK and GrpE. It is the nucleotide exchange factor for DnaK and may function as a thermosensor. Unfolded proteins bind initially to DnaJ; upon interaction with the DnaJ-bound protein, DnaK hydrolyzes its bound ATP, resulting in the formation of a stable complex. GrpE releases ADP from DnaK; ATP binding to DnaK triggers the release of the substrate protein, thus completing the reaction cycle. Several rounds of ATP-dependent interactions between DnaJ, DnaK and GrpE are required for fully efficient folding. The chain is Protein GrpE from Shewanella denitrificans (strain OS217 / ATCC BAA-1090 / DSM 15013).